We begin with the raw amino-acid sequence, 332 residues long: Ketol-acid reductoisomerase (NADP(+)) (332 aa).

The 182-residue stretch at 1–182 (MAVIYYDKDC…GSNRAGVLET (182 aa)) folds into the KARI N-terminal Rossmann domain. NADP(+)-binding positions include 25 to 28 (YGAQ) and 83 to 86 (DTSQ). Histidine 108 is a catalytic residue. Glycine 134 serves as a coordination point for NADP(+). The 146-residue stretch at 183 to 328 (TFAEETETDL…AELRSMMSWL (146 aa)) folds into the KARI C-terminal knotted domain. Mg(2+) contacts are provided by aspartate 191, glutamate 195, glutamate 227, and glutamate 231. Substrate is bound at residue serine 252.

It belongs to the ketol-acid reductoisomerase family. It depends on Mg(2+) as a cofactor.

It carries out the reaction (2R)-2,3-dihydroxy-3-methylbutanoate + NADP(+) = (2S)-2-acetolactate + NADPH + H(+). It catalyses the reaction (2R,3R)-2,3-dihydroxy-3-methylpentanoate + NADP(+) = (S)-2-ethyl-2-hydroxy-3-oxobutanoate + NADPH + H(+). Its pathway is amino-acid biosynthesis; L-isoleucine biosynthesis; L-isoleucine from 2-oxobutanoate: step 2/4. It functions in the pathway amino-acid biosynthesis; L-valine biosynthesis; L-valine from pyruvate: step 2/4. Functionally, involved in the biosynthesis of branched-chain amino acids (BCAA). Catalyzes an alkyl-migration followed by a ketol-acid reduction of (S)-2-acetolactate (S2AL) to yield (R)-2,3-dihydroxy-isovalerate. In the isomerase reaction, S2AL is rearranged via a Mg-dependent methyl migration to produce 3-hydroxy-3-methyl-2-ketobutyrate (HMKB). In the reductase reaction, this 2-ketoacid undergoes a metal-dependent reduction by NADPH to yield (R)-2,3-dihydroxy-isovalerate. The protein is Ketol-acid reductoisomerase (NADP(+)) of Dehalococcoides mccartyi (strain ATCC BAA-2266 / KCTC 15142 / 195) (Dehalococcoides ethenogenes (strain 195)).